A 497-amino-acid chain; its full sequence is Lysine--tRNA ligase (497 aa).

Mg(2+) is bound by residues glutamate 409 and glutamate 416.

This sequence belongs to the class-II aminoacyl-tRNA synthetase family. Homodimer. Requires Mg(2+) as cofactor.

Its subcellular location is the cytoplasm. The enzyme catalyses tRNA(Lys) + L-lysine + ATP = L-lysyl-tRNA(Lys) + AMP + diphosphate. The sequence is that of Lysine--tRNA ligase from Streptococcus pyogenes serotype M3 (strain ATCC BAA-595 / MGAS315).